The primary structure comprises 563 residues: Secreted lipase ARB07186/07185 (563 aa).

Residues 1 to 20 (MAKYDFVMLWILTLTAAIAA) form the signal peptide. A disulfide bridge links cysteine 83 with cysteine 101. Serine 215 functions as the Acyl-ester intermediate in the catalytic mechanism. Cysteine 268 and cysteine 281 form a disulfide bridge.

Belongs to the type-B carboxylesterase/lipase family.

It is found in the secreted. It catalyses the reaction a triacylglycerol + H2O = a diacylglycerol + a fatty acid + H(+). In Arthroderma benhamiae (strain ATCC MYA-4681 / CBS 112371) (Trichophyton mentagrophytes), this protein is Secreted lipase ARB07186/07185.